The primary structure comprises 526 residues: Putative ankyrin repeat protein R840 (526 aa).

ANK repeat units follow at residues 78–107 (TLNE…NIRS), 108–137 (RDNF…DIRS), 139–167 (KNYA…NIRD), 169–197 (DNCA…DSTS), 198–227 (NFNE…RCRN), 229–255 (SAII…NIRI), 256–285 (DDDY…NIRS), 286–315 (EIDH…DIKS), 317–345 (YDRS…NIRN), 346–375 (INDY…NIRV), 376–405 (DNDS…DIRV), 406–435 (NNYQ…NVSI), 437–467 (NVPL…DINL), 468–497 (ADDM…NVRA), and 499–526 (NDYA…AILS).

This is Putative ankyrin repeat protein R840 from Acanthamoeba polyphaga (Amoeba).